The following is a 546-amino-acid chain: Capsid protein VP1 (546 aa).

The segment at 1 to 38 (MMMASKDAPQSADGASGAGQLVPEVNTADPLPMEPVAG) is disordered. The shell domain stretch occupies residues 1-226 (MMMASKDAPQ…FLFLVPPTIE (226 aa)). The tract at residues 227–279 (QKTRAFTVPNIPLQTLSNSRFPSLIQGMILSPDASQVVQFQNGRCLIDGQLLG) is P1 sub-domain 1. Residues 227–545 (QKTRAFTVPN…TARGRLGVRR (319 aa)) are protruding domain. Residues 280 to 416 (TTPATSGQLF…GSSLSQAANL (137 aa)) are P2 sub-domain. A P1 sub-domain 2 region spans residues 417–546 (APPVFPPGFG…ARGRLGVRRI (130 aa)). The interval 538-545 (RGRLGVRR) is plays a role in binding to host histo-blood group structures antigens and in the formation of P-particles.

It belongs to the caliciviridae capsid protein family. In terms of assembly, homodimer. Homomultimer. Interacts with the minor capsid protein VP2. Interacts (via C-terminus) with host type I histo-blood group structures antigens at the surface of target cells. In terms of processing, may be cleaved by host protease to generate soluble capsid protein. Assembled capsid cannot be cleaved.

The protein resides in the virion. It is found in the host cytoplasm. In terms of biological role, capsid protein self assembles to form an icosahedral capsid with a T=3 symmetry, about 38 nm in diameter, and consisting of 180 capsid proteins. A smaller form of capsid with a diameter of 23 nm might be capsid proteins assembled as icosahedron with T=1 symmetry. The capsid encapsulates the genomic RNA and is decorated with VP2 proteins. Attaches virion to target cells by binding histo-blood group antigens (HBGAs) present on gastroduodenal epithelial cells. The soluble capsid protein may play a role in viral immunoevasion. This Southampton virus (strain GI/Human/United Kingdom/Southampton/1991) (SHV) protein is Capsid protein VP1.